A 519-amino-acid polypeptide reads, in one-letter code: Ribonuclease Y (519 aa).

The chain crosses the membrane as a helical span at residues 3 to 23; that stretch reads PMTVLISILLTLLGLVVGYYV. The 64-residue stretch at 209 to 272 folds into the KH domain; the sequence is TVSVVNLPND…ETARIALDKL (64 aa). One can recognise an HD domain in the interval 335-428; sequence VLKHSMEVAF…VAAADALSAA (94 aa).

The protein belongs to the RNase Y family.

It is found in the cell membrane. Functionally, endoribonuclease that initiates mRNA decay. This is Ribonuclease Y from Bacillus velezensis (strain DSM 23117 / BGSC 10A6 / LMG 26770 / FZB42) (Bacillus amyloliquefaciens subsp. plantarum).